The sequence spans 436 residues: Xylose isomerase (436 aa).

Residues His-100 and Asp-103 contribute to the active site. Glu-231, Glu-267, His-270, Asp-295, Asp-306, Asp-308, and Asp-338 together coordinate Mg(2+).

This sequence belongs to the xylose isomerase family. As to quaternary structure, homotetramer. Mg(2+) serves as cofactor.

It localises to the cytoplasm. It catalyses the reaction alpha-D-xylose = alpha-D-xylulofuranose. In Agrobacterium fabrum (strain C58 / ATCC 33970) (Agrobacterium tumefaciens (strain C58)), this protein is Xylose isomerase.